The chain runs to 398 residues: Nematocin receptor 2 (398 aa).

Topologically, residues 1–25 are extracellular; that stretch reads MNNNTLNITNQRTAAAMSQIYFLVV. 2 N-linked (GlcNAc...) asparagine glycosylation sites follow: N3 and N7. A helical transmembrane segment spans residues 26 to 46; sequence YQTAVMIVSLLGNLFLLFVIF. The Cytoplasmic segment spans residues 47–58; it reads RANQVMKRRVSP. The chain crosses the membrane as a helical span at residues 59–79; that stretch reads VQLLIIHTCVADLLFALLSLG. The Extracellular segment spans residues 80–99; the sequence is TEILTLRTYPQYYGSNFVCK. Cysteines 98 and 173 form a disulfide. Residues 100 to 120 traverse the membrane as a helical segment; it reads LMRYVQMFPMYASPFLLVAIS. Residues 121-143 lie on the Cytoplasmic side of the membrane; the sequence is ADRYQAICRPLAHFRSSRYRRPN. Residues 144–164 traverse the membrane as a helical segment; the sequence is WMAAIAWGLALVLSIPQFFVW. Residues 165-187 are Extracellular-facing; it reads TKHSKTGRCSTIYGQNKNTVKIT. The helical transmembrane segment at 188–208 threads the bilayer; sequence YVIMFNTLAWLLPSILAAVFY. At 209-271 the chain is on the cytoplasmic side; sequence YCVCKAVRLS…DRKRVQTVRL (63 aa). A helical membrane pass occupies residues 272 to 292; the sequence is TITIVACNFFLWMPFCLINVI. Over 293 to 302 the chain is Extracellular; that stretch reads QALWPEISHI. A helical membrane pass occupies residues 303 to 325; it reads MFINYVAILGNLNSCLNPWIYIL. Residues 326–398 are Cytoplasmic-facing; it reads FNRSHVRKAL…DSTSLKTNSN (73 aa).

It belongs to the G-protein coupled receptor 1 family. Vasopressin/oxytocin receptor subfamily. In terms of tissue distribution, detected in the ADL sensory neurons, the RMED and RMEV motor neurons, and the PQR tail neuron. In males, detected in SPC tail neurons involved in spicule penetration and sperm transfer, and male-specific oblique muscles involved in vulval contact.

It localises to the cell membrane. In terms of biological role, not directly activated by nematocin. May modulate activity of the nematocin receptor ntr-1, leading to reduced intracellular cAMP production. Plays a role in male mating behavior. In Caenorhabditis elegans, this protein is Nematocin receptor 2.